The chain runs to 495 residues: UDP-N-acetylmuramate--L-alanine ligase (495 aa).

An ATP-binding site is contributed by 120-126; the sequence is GSHGKTT.

This sequence belongs to the MurCDEF family.

It is found in the cytoplasm. The enzyme catalyses UDP-N-acetyl-alpha-D-muramate + L-alanine + ATP = UDP-N-acetyl-alpha-D-muramoyl-L-alanine + ADP + phosphate + H(+). Its pathway is cell wall biogenesis; peptidoglycan biosynthesis. In terms of biological role, cell wall formation. The polypeptide is UDP-N-acetylmuramate--L-alanine ligase (Rickettsia prowazekii (strain Madrid E)).